We begin with the raw amino-acid sequence, 123 residues long: Iron-sulfur cluster insertion protein ErpA (123 aa).

C51, C115, and C117 together coordinate iron-sulfur cluster.

Belongs to the HesB/IscA family. In terms of assembly, homodimer. Requires iron-sulfur cluster as cofactor.

Functionally, required for insertion of 4Fe-4S clusters for at least IspG. This chain is Iron-sulfur cluster insertion protein ErpA, found in Halorhodospira halophila (strain DSM 244 / SL1) (Ectothiorhodospira halophila (strain DSM 244 / SL1)).